The primary structure comprises 464 residues: Phosphoglucosamine mutase (464 aa).

Residue S112 is the Phosphoserine intermediate of the active site. Mg(2+) is bound by residues S112, D252, D254, and D256. The residue at position 112 (S112) is a Phosphoserine.

It belongs to the phosphohexose mutase family. Mg(2+) serves as cofactor. In terms of processing, activated by phosphorylation.

The enzyme catalyses alpha-D-glucosamine 1-phosphate = D-glucosamine 6-phosphate. Catalyzes the conversion of glucosamine-6-phosphate to glucosamine-1-phosphate. This is Phosphoglucosamine mutase from Synechococcus sp. (strain CC9902).